A 331-amino-acid chain; its full sequence is Ketol-acid reductoisomerase (NADP(+)) (331 aa).

In terms of domain architecture, KARI N-terminal Rossmann spans 2 to 182 (ARMYYDSDAN…GGTRAGILET (181 aa)). Residues 25–28 (YGSQ), Ser-51, Ser-53, and 83–86 (DEVQ) each bind NADP(+). His-108 is a catalytic residue. Residue Gly-134 participates in NADP(+) binding. The 146-residue stretch at 183–328 (TFREETETDL…KDLRAMFSWL (146 aa)) folds into the KARI C-terminal knotted domain. Mg(2+) is bound by residues Asp-191, Glu-195, Glu-227, and Glu-231. Ser-252 serves as a coordination point for substrate.

This sequence belongs to the ketol-acid reductoisomerase family. Mg(2+) is required as a cofactor.

It carries out the reaction (2R)-2,3-dihydroxy-3-methylbutanoate + NADP(+) = (2S)-2-acetolactate + NADPH + H(+). It catalyses the reaction (2R,3R)-2,3-dihydroxy-3-methylpentanoate + NADP(+) = (S)-2-ethyl-2-hydroxy-3-oxobutanoate + NADPH + H(+). It participates in amino-acid biosynthesis; L-isoleucine biosynthesis; L-isoleucine from 2-oxobutanoate: step 2/4. Its pathway is amino-acid biosynthesis; L-valine biosynthesis; L-valine from pyruvate: step 2/4. Its function is as follows. Involved in the biosynthesis of branched-chain amino acids (BCAA). Catalyzes an alkyl-migration followed by a ketol-acid reduction of (S)-2-acetolactate (S2AL) to yield (R)-2,3-dihydroxy-isovalerate. In the isomerase reaction, S2AL is rearranged via a Mg-dependent methyl migration to produce 3-hydroxy-3-methyl-2-ketobutyrate (HMKB). In the reductase reaction, this 2-ketoacid undergoes a metal-dependent reduction by NADPH to yield (R)-2,3-dihydroxy-isovalerate. The protein is Ketol-acid reductoisomerase (NADP(+)) of Trichodesmium erythraeum (strain IMS101).